The sequence spans 161 residues: Allophycocyanin alpha chain 1 (161 aa).

N71 bears the N4-methylasparagine mark. A (2R,3E)-phycocyanobilin-binding site is contributed by C81.

This sequence belongs to the phycobiliprotein family. In terms of assembly, component of the phycobilisome. Heterodimer of an alpha and a beta chain. In terms of processing, contains one covalently linked bilin chromophore.

The protein localises to the cellular thylakoid membrane. Light-harvesting photosynthetic bile pigment-protein from the phycobiliprotein complex. Allophycocyanin has a maximum absorption at approximately 650 nanometers. This is Allophycocyanin alpha chain 1 from Microchaete diplosiphon (Fremyella diplosiphon).